The chain runs to 93 residues: Microcin N immunity protein (93 aa).

Helical transmembrane passes span 3–23 (FLNF…FIVW), 36–56 (LSII…NYKI), and 68–88 (LFCF…YFIL).

Belongs to the MceB microcin immunity protein family.

It localises to the cell inner membrane. Probably able to protect the producing cell against microcin N (microcin 24). This is Microcin N immunity protein from Escherichia coli.